The sequence spans 190 residues: 6,7-dimethyl-8-ribityllumazine synthase (190 aa).

5-amino-6-(D-ribitylamino)uracil-binding positions include tryptophan 31, 65–67 (SFE), and 89–91 (CVI). 94–95 (ET) contacts (2S)-2-hydroxy-3-oxobutyl phosphate. Histidine 97 (proton donor) is an active-site residue. Phenylalanine 122 is a 5-amino-6-(D-ribitylamino)uracil binding site. Arginine 136 is a (2S)-2-hydroxy-3-oxobutyl phosphate binding site.

This sequence belongs to the DMRL synthase family.

The catalysed reaction is (2S)-2-hydroxy-3-oxobutyl phosphate + 5-amino-6-(D-ribitylamino)uracil = 6,7-dimethyl-8-(1-D-ribityl)lumazine + phosphate + 2 H2O + H(+). Its pathway is cofactor biosynthesis; riboflavin biosynthesis; riboflavin from 2-hydroxy-3-oxobutyl phosphate and 5-amino-6-(D-ribitylamino)uracil: step 1/2. Its function is as follows. Catalyzes the formation of 6,7-dimethyl-8-ribityllumazine by condensation of 5-amino-6-(D-ribitylamino)uracil with 3,4-dihydroxy-2-butanone 4-phosphate. This is the penultimate step in the biosynthesis of riboflavin. The sequence is that of 6,7-dimethyl-8-ribityllumazine synthase from Flavobacterium johnsoniae (strain ATCC 17061 / DSM 2064 / JCM 8514 / BCRC 14874 / CCUG 350202 / NBRC 14942 / NCIMB 11054 / UW101) (Cytophaga johnsonae).